The primary structure comprises 198 residues: uncharacterized protein (198 aa).

Residues 1–28 (MHPTQRKLMKRIILFLSLLFCIACPAIA) form the signal peptide.

The protein belongs to the fimbrial protein family.

The protein resides in the fimbrium. In terms of biological role, part of the yadCKLM-htrE-yadVN fimbrial operon. Could contribute to adhesion to various surfaces in specific environmental niches. This is an uncharacterized protein from Escherichia coli (strain K12).